A 438-amino-acid polypeptide reads, in one-letter code: DEAD-box ATP-dependent RNA helicase 58, chloroplastic (438 aa).

A chloroplast-targeting transit peptide spans 1–44 (MAAFSGCASPLSTTLRSGLAPFTLRHRLRLRRLRASAATLREVC). The short motif at 41–69 (REVCAGRVPEHVLQRAEEVGYVVPTEVQE) is the Q motif element. The 174-residue stretch at 72 to 245 (LPVLLSGQDC…DCVQHKWTKT (174 aa)) folds into the Helicase ATP-binding domain. 85 to 92 (AQTGSGKT) contributes to the ATP binding site. A DEAD box motif is present at residues 190–193 (DEVD). Residues 274–436 (RLHVLLSLLE…ELPVESMFAF (163 aa)) form the Helicase C-terminal domain.

The protein belongs to the DEAD box helicase family.

It localises to the plastid. It is found in the chloroplast. The catalysed reaction is ATP + H2O = ADP + phosphate + H(+). The chain is DEAD-box ATP-dependent RNA helicase 58, chloroplastic from Oryza sativa subsp. japonica (Rice).